A 173-amino-acid chain; its full sequence is MWYKVLGIVSLCSVYVSTQGSNLQCKIAGGGELIPIRTPEYRAWVPLGEVGLNVSDSKVLIFAARSCFGAHILLQNNAEDFKNAVYEIVIGGMKNTRSGIRQCVGCKFDEWVKDKALNCRFFNYFWISWCGDEVWVGHGYRPPHNRILRYKYENQPVINAASVRSESDTYWAL.

Positions 1-20 are cleaved as a signal peptide; that stretch reads MWYKVLGIVSLCSVYVSTQG. N-linked (GlcNAc...) asparagine glycosylation occurs at Asn53.

As to expression, component of the acid-insoluble organic matrix of calcified shell layers (at protein level).

The protein localises to the secreted. This is an uncharacterized protein from Haliotis asinina (Donkey's ear abalone).